The chain runs to 319 residues: Olfactory receptor 2S2 (319 aa).

Residues 1–26 are Extracellular-facing; sequence MEKANETSPVMGFVLLRLSAHPELEK. N5 carries N-linked (GlcNAc...) asparagine glycosylation. A helical transmembrane segment spans residues 27 to 50; sequence TFFVLILLMYLVILLGNGVLILVT. At 51-58 the chain is on the cytoplasmic side; sequence ILDSRLHT. A helical transmembrane segment spans residues 59–80; it reads PMYFFLGNLSFLDICFTTSSVP. Topologically, residues 81-101 are extracellular; the sequence is LVLDSFLTPQETISFSACAVQ. An intrachain disulfide couples C98 to C190. The helical transmembrane segment at 102–121 threads the bilayer; sequence MALSFAMAGTECLLLSMMAF. At 122–140 the chain is on the cytoplasmic side; sequence DRYVAICNPLRYSVIMSKA. Residues 141-159 form a helical membrane-spanning segment; sequence AYMPMAASSWAIGGAASVV. Topologically, residues 160–196 are extracellular; the sequence is HTSLAIQLPFCGDNVINHFTCEILAVLKLACADISIN. The chain crosses the membrane as a helical span at residues 197–220; that stretch reads VISMEVTNVIFLGVPVLFISFSYV. Residues 221-237 are Cytoplasmic-facing; that stretch reads FIITTILRIPSAEGRKK. A helical transmembrane segment spans residues 238–260; the sequence is VFSTCSAHLTVVIVFYGTLFFMY. The Extracellular portion of the chain corresponds to 261–279; it reads GKPKSKDSMGADKEDLSDK. The helical transmembrane segment at 280 to 299 threads the bilayer; it reads LIPLFYGVVTPMLNPIIYSL. At 300-319 the chain is on the cytoplasmic side; that stretch reads RNKDVKAAVRRLLRPKGFTQ.

The protein belongs to the G-protein coupled receptor 1 family.

Its subcellular location is the cell membrane. Odorant receptor. In Homo sapiens (Human), this protein is Olfactory receptor 2S2 (OR2S2).